The sequence spans 147 residues: Large ribosomal subunit protein uL15 (147 aa).

The interval 1–47 is disordered; it reads MKLHELKPAEGAVRAKRRLGRGTATGQGKTAGRGQKGQWSRSGGGVR. The span at 23–35 shows a compositional bias: gly residues; sequence TATGQGKTAGRGQ.

It belongs to the universal ribosomal protein uL15 family. Part of the 50S ribosomal subunit.

In terms of biological role, binds to the 23S rRNA. The chain is Large ribosomal subunit protein uL15 from Clostridioides difficile (strain 630) (Peptoclostridium difficile).